The following is a 544-amino-acid chain: Chaperonin GroEL (544 aa).

ATP-binding positions include Thr30–Pro33, Lys51, Asp87–Thr91, Gly415, and Asp495.

It belongs to the chaperonin (HSP60) family. Forms a cylinder of 14 subunits composed of two heptameric rings stacked back-to-back. Interacts with the co-chaperonin GroES.

Its subcellular location is the cytoplasm. The catalysed reaction is ATP + H2O + a folded polypeptide = ADP + phosphate + an unfolded polypeptide.. Functionally, together with its co-chaperonin GroES, plays an essential role in assisting protein folding. The GroEL-GroES system forms a nano-cage that allows encapsulation of the non-native substrate proteins and provides a physical environment optimized to promote and accelerate protein folding. The sequence is that of Chaperonin GroEL from Bartonella bacilliformis (strain ATCC 35685 / KC583 / Herrer 020/F12,63).